The chain runs to 128 residues: Probable prefoldin subunit 6 (128 aa).

Belongs to the prefoldin subunit beta family. Heterohexamer of two PFD-alpha type and four PFD-beta type subunits.

The protein resides in the cytoplasm. In terms of biological role, binds specifically to cytosolic chaperonin (c-CPN) and transfers target proteins to it. Binds to nascent polypeptide chain and promotes folding in an environment in which there are many competing pathways for nonnative proteins. Required for positioning of the mitotic spindle. This chain is Probable prefoldin subunit 6, found in Caenorhabditis briggsae.